We begin with the raw amino-acid sequence, 255 residues long: Complement C1q-like protein 3 (255 aa).

Residues 1–20 (MVLLLVILIPVLVSSAGTSA) form the signal peptide. Residues 39 to 109 (KAPSTAATPD…GLPGPPGAPG (71 aa)) form a disordered region. A Collagen-like domain is found at 61 to 111 (GPKGEAGRPGKAGPRGPPGEPGPPGPMGPPGEKGEPGRQGLPGPPGAPGLN). Over residues 75–89 (RGPPGEPGPPGPMGP) the composition is skewed to pro residues. In terms of domain architecture, C1q spans 122–255 (STVPKIAFYA…TFSGFIIYAD (134 aa)).

As to quaternary structure, forms homooligomers. Interacts with ADGRB3. Interacts with C1QL2 and C1QL4, when proteins are coexpressed; this interaction does not occur after secretion. Highly expressed in adipose tissue, with expression levels at least 2 orders of magnitude higher than in other tissues, including brain and kidney.

It localises to the secreted. Functionally, may regulate the number of excitatory synapses that are formed on hippocampus neurons. Has no effect on inhibitory synapses. Plays a role in glucose homeostasis. Via AMPK signaling pathway, stimulates glucose uptake in adipocytes, myotubes and hepatocytes and enhances insulin-stimulated glucose uptake. In a hepatoma cell line, reduces the expression of gluconeogenic enzymes G6PC1 and PCK1 and hence decreases de novo glucose production. The sequence is that of Complement C1q-like protein 3 (C1QL3) from Homo sapiens (Human).